Reading from the N-terminus, the 565-residue chain is Mitochondrial distribution and morphology protein 34 (565 aa).

Residues 1 to 208 (MAFNFNWSPL…VPEYRDRESE (208 aa)) form the SMP-LTD domain. The segment covering 209–220 (SVNTLDLSSESG) has biased composition (polar residues). 3 disordered regions span residues 209 to 241 (SVNT…GNAL), 347 to 463 (FGSY…SRSA), and 533 to 565 (MQEQ…AYGH). Residues 353 to 367 (PGRHSRSHTKKRKKR) are compositionally biased toward basic residues. Basic and acidic residues predominate over residues 368 to 378 (VVDLRRPKTTD). Positions 382-391 (SVSGDSVFSS) are enriched in low complexity. 2 stretches are compositionally biased toward polar residues: residues 392 to 402 (ENATSAPTIFS) and 439 to 463 (QGDQ…SRSA).

The protein belongs to the MDM34 family. As to quaternary structure, component of the ER-mitochondria encounter structure (ERMES) or MDM complex, composed of mmm1, mdm10, mdm12 and mdm34.

It localises to the mitochondrion outer membrane. Component of the ERMES/MDM complex, which serves as a molecular tether to connect the endoplasmic reticulum (ER) and mitochondria. Components of this complex are involved in the control of mitochondrial shape and protein biogenesis, and function in nonvesicular lipid trafficking between the ER and mitochondria. Mdm34 is required for the interaction of the ER-resident membrane protein mmm1 and the outer mitochondrial membrane-resident beta-barrel protein mdm10. This chain is Mitochondrial distribution and morphology protein 34, found in Talaromyces marneffei (strain ATCC 18224 / CBS 334.59 / QM 7333) (Penicillium marneffei).